Here is a 238-residue protein sequence, read N- to C-terminus: Protein TIFY 3A (238 aa).

The Tify 1 domain occupies 39–74 (EPDASTQLTIIFGGSCRVFNGVPAQKVQEIIRIAFA). The Jas 1 signature appears at 101–120 (PIARRRSLQRFLEKRRDRST). Positions 103-110 (ARRRSLQR) match the Nuclear localization signal 1 motif. The Tify 2 domain maps to 125-160 (SMILPSQLTIIFGGSFSVFDGIPAEKVQEILHIAAA). A Jas 2 motif is present at residues 197 to 222 (PIARRRSLQRFFEKRRHRFVHTKPYS). A Nuclear localization signal 2 motif is present at residues 199-206 (ARRRSLQR). The interval 219 to 238 (KPYSATTSEADKNETSPIVT) is disordered.

Belongs to the TIFY/JAZ family. In terms of assembly, interacts with MYC2, MYB21, MYB24, AFPH2/NINJA, TIFY10A/JAZ1, TIFY10B/JAZ2, TIFY6B/JAZ3, TIFY6A/JAZ4, TIFY7/JAZ9 and TIFY9/JAZ10. Ubiquitinated. Targeted for degradation by the SCF(COI1) E3 ubiquitin ligase-proteasome pathway during jasmonate signaling.

The protein localises to the nucleus. Its function is as follows. Repressor of jasmonate (JA) responses. Targets MYC2, MYC3 and MYC4 that are JA-dependent transcription activators. The chain is Protein TIFY 3A (TIFY3A) from Arabidopsis thaliana (Mouse-ear cress).